The chain runs to 654 residues: Kelch-like protein 13 (654 aa).

In terms of domain architecture, BTB spans 91 to 160; it reads CDVTLMPGDT…IYTAKLSLNM (70 aa). One can recognise a BACK domain in the interval 195–296; the sequence is CVEVGRIANT…TPQELINYVQ (102 aa). 6 Kelch repeats span residues 340 to 388, 389 to 440, 441 to 487, 489 to 534, 536 to 586, and 587 to 635; these read RLVT…VIGN, FLYV…ALKG, FLYA…VYGG, MYIS…TVGD, LYVI…VFEN, and KIYV…TLTV.

Component of the BCR(KLHL9-KLHL13) E3 ubiquitin ligase complex, at least composed of CUL3, KLHL9, KLHL13 and RBX1. Interacts with AURKB.

The protein operates within protein modification; protein ubiquitination. Its function is as follows. Substrate-specific adapter of a BCR (BTB-CUL3-RBX1) E3 ubiquitin-protein ligase complex required for mitotic progression and cytokinesis. The BCR(KLHL9-KLHL13) E3 ubiquitin ligase complex mediates the ubiquitination of AURKB and controls the dynamic behavior of AURKB on mitotic chromosomes and thereby coordinates faithful mitotic progression and completion of cytokinesis. In Mus musculus (Mouse), this protein is Kelch-like protein 13 (Klhl13).